The sequence spans 31 residues: Photosystem II reaction center protein T (31 aa).

The helical transmembrane segment at serine 3 to phenylalanine 23 threads the bilayer.

It belongs to the PsbT family. In terms of assembly, PSII is composed of 1 copy each of membrane proteins PsbA, PsbB, PsbC, PsbD, PsbE, PsbF, PsbH, PsbI, PsbJ, PsbK, PsbL, PsbM, PsbT, PsbX, PsbY, PsbZ, Psb30/Ycf12, peripheral proteins PsbO, CyanoQ (PsbQ), PsbU, PsbV and a large number of cofactors. It forms dimeric complexes.

It localises to the cellular thylakoid membrane. Its function is as follows. Found at the monomer-monomer interface of the photosystem II (PS II) dimer, plays a role in assembly and dimerization of PSII. PSII is a light-driven water plastoquinone oxidoreductase, using light energy to abstract electrons from H(2)O, generating a proton gradient subsequently used for ATP formation. This is Photosystem II reaction center protein T from Rippkaea orientalis (strain PCC 8801 / RF-1) (Cyanothece sp. (strain PCC 8801)).